Here is a 265-residue protein sequence, read N- to C-terminus: Phosphatidylglycerol--prolipoprotein diacylglyceryl transferase (265 aa).

Transmembrane regions (helical) follow at residues 17-37 (LAIR…IWLA), 59-79 (MLFY…VLFY), 94-114 (VWKG…AMSI), 123-143 (VLDV…FGRL), 177-197 (SPLY…WLFA), 204-224 (MAVG…TEYF), and 238-258 (ISAG…MLLI). Arg-142 contacts a 1,2-diacyl-sn-glycero-3-phospho-(1'-sn-glycerol).

Belongs to the Lgt family.

Its subcellular location is the cell inner membrane. It catalyses the reaction L-cysteinyl-[prolipoprotein] + a 1,2-diacyl-sn-glycero-3-phospho-(1'-sn-glycerol) = an S-1,2-diacyl-sn-glyceryl-L-cysteinyl-[prolipoprotein] + sn-glycerol 1-phosphate + H(+). Its pathway is protein modification; lipoprotein biosynthesis (diacylglyceryl transfer). Catalyzes the transfer of the diacylglyceryl group from phosphatidylglycerol to the sulfhydryl group of the N-terminal cysteine of a prolipoprotein, the first step in the formation of mature lipoproteins. In Janthinobacterium sp. (strain Marseille) (Minibacterium massiliensis), this protein is Phosphatidylglycerol--prolipoprotein diacylglyceryl transferase.